The following is a 328-amino-acid chain: Malate dehydrogenase (328 aa).

An NAD(+)-binding site is contributed by 12–18 (GAAGQIG). Residues Arg-95 and Arg-101 each coordinate substrate. Residues Asn-108, Gln-115, and 132 to 134 (VGN) contribute to the NAD(+) site. Residues Asn-134 and Arg-165 each contribute to the substrate site. Residue His-190 is the Proton acceptor of the active site.

Belongs to the LDH/MDH superfamily. MDH type 2 family.

It catalyses the reaction (S)-malate + NAD(+) = oxaloacetate + NADH + H(+). Functionally, catalyzes the reversible oxidation of malate to oxaloacetate. This is Malate dehydrogenase from Variovorax paradoxus (strain S110).